Reading from the N-terminus, the 349-residue chain is Isopentenyl-diphosphate delta-isomerase (349 aa).

A substrate-binding site is contributed by 6–7 (RK). FMN-binding positions include 62–64 (AMT), serine 93, and asparagine 122. Glutamine 152 is a substrate binding site. Glutamate 153 contacts Mg(2+). FMN-binding positions include lysine 184, threonine 214, 258–259 (GG), and 280–281 (AG).

This sequence belongs to the IPP isomerase type 2 family. Homooctamer. Dimer of tetramers. FMN serves as cofactor. Requires NADPH as cofactor. Mg(2+) is required as a cofactor.

It localises to the cytoplasm. It catalyses the reaction isopentenyl diphosphate = dimethylallyl diphosphate. Its function is as follows. Involved in the biosynthesis of isoprenoids. Catalyzes the 1,3-allylic rearrangement of the homoallylic substrate isopentenyl (IPP) to its allylic isomer, dimethylallyl diphosphate (DMAPP). The sequence is that of Isopentenyl-diphosphate delta-isomerase from Bacillus cereus (strain 03BB102).